A 127-amino-acid chain; its full sequence is Aspartate 1-decarboxylase (127 aa).

Catalysis depends on serine 25, which acts as the Schiff-base intermediate with substrate; via pyruvic acid. Residue serine 25 is modified to Pyruvic acid (Ser). Position 57 (threonine 57) interacts with substrate. The active-site Proton donor is tyrosine 58. 73–75 (GAA) contacts substrate.

Belongs to the PanD family. As to quaternary structure, heterooctamer of four alpha and four beta subunits. Pyruvate serves as cofactor. In terms of processing, is synthesized initially as an inactive proenzyme, which is activated by self-cleavage at a specific serine bond to produce a beta-subunit with a hydroxyl group at its C-terminus and an alpha-subunit with a pyruvoyl group at its N-terminus.

The protein resides in the cytoplasm. The catalysed reaction is L-aspartate + H(+) = beta-alanine + CO2. The protein operates within cofactor biosynthesis; (R)-pantothenate biosynthesis; beta-alanine from L-aspartate: step 1/1. Catalyzes the pyruvoyl-dependent decarboxylation of aspartate to produce beta-alanine. This Listeria innocua serovar 6a (strain ATCC BAA-680 / CLIP 11262) protein is Aspartate 1-decarboxylase.